We begin with the raw amino-acid sequence, 100 residues long: Mini zinc finger protein 2 (100 aa).

Positions 1 to 26 are disordered; it reads MRKRQVVLRRASPEEPSRSSSTASSL. A ZF-HD dimerization-type; degenerate zinc finger spans residues 33–83; the sequence is YGECQKNHAAAVGGYAVDGCREFMASRGEEGTVAALTCAACGCHRSFHRRE.

In terms of assembly, homo- and heterodimers. Interacts with ZHD1, ZHD3, ZHD5, ZHD8, ZHD10 and ZHD13. Mostly expressed in stems, flowers and siliques, and, to a lower extent, in inflorescence.

It localises to the cytoplasm. Inhibits zinc finger homeodomain (ZHD) transcription factors by interacting with them to prevent both their nuclear localization and their DNA-binding properties. Involved in integrating signals from multiple hormones by regulating the expression of specific genes. In Arabidopsis thaliana (Mouse-ear cress), this protein is Mini zinc finger protein 2 (MIF2).